We begin with the raw amino-acid sequence, 697 residues long: MDDLLDFNFYDKSTPSNQNNYSNNNSRTPSYSLPAPVAQKKNAQIPLKASKPEDPFANLFQKKTDNKISLKELERQKVGTPDSNSTPKSSNYDPFENLEILHQLSNTPRDKDAVIHDKIEENKRPISQPQVSASEKVTLKDLSLEPHQPVSLPAFENIGSETSIPFENHNEITNMNTAKDKLSSNEMYEKLRDLGFSDDQSRLALENSGSLEDAIEYILEKDNAKGQYREGEAYEAFSDSSAKTQFSDFQALSNQLKSQLFEKANDLWNIGRKKLRDAVEERRAVKDPSKPRWMDASHDFGREATPEILPKTPIPKRKPHKVPMNEKVSEDRITTNQSRSGNDESSLVDFLTSKSDNSSFNFPSDTYEGTENILETAYESTTARQVNNNKPGKSTVKKREEETLNNMVSALVEEQQSTGNELFRKGDFSQAIEEFTNSLSQLPAKHTKRVPLLSNRSLCYQKVGDLKTCLQDVDELVDIIGEEKGHGESIRDKSMNDYYVKNMVRKAQVLEQLEKYQESLNIWKDLIADGQISKLYIDGKHRCEAAISSHSSESHSKRTTQQPKSTPNHTNIKVKSERLQHVRMAQQKAEQLDEERSRLREPVQQIVNKWKEGKESNLRALLASLDTILWPECRWQKVSLSELVLPKKVKIAYMKAVSRVHPDKLPQQTSVEHQLIAESAFSILNHAWELFKQQNDL.

The tract at residues 1 to 94 is disordered; that stretch reads MDDLLDFNFY…STPKSSNYDP (94 aa). Over residues 13–32 the composition is skewed to low complexity; that stretch reads STPSNQNNYSNNNSRTPSYS. Positions 62-77 are enriched in basic and acidic residues; the sequence is KKTDNKISLKELERQK. Residues 81–92 show a composition bias toward polar residues; the sequence is PDSNSTPKSSNY. A UBA domain is found at 181–221; the sequence is KLSSNEMYEKLRDLGFSDDQSRLALENSGSLEDAIEYILEK. Positions 306–346 are disordered; it reads PEILPKTPIPKRKPHKVPMNEKVSEDRITTNQSRSGNDESS. Residues 323–333 are compositionally biased toward basic and acidic residues; it reads PMNEKVSEDRI. Residues 334 to 345 show a composition bias toward polar residues; it reads TTNQSRSGNDES. The stretch at 412 to 445 is one TPR repeat; that stretch reads VEEQQSTGNELFRKGDFSQAIEEFTNSLSQLPAK. The segment at 547–573 is disordered; it reads ISSHSSESHSKRTTQQPKSTPNHTNIK. A compositionally biased stretch (polar residues) spans 559 to 573; sequence TTQQPKSTPNHTNIK. The region spanning 633-696 is the J domain; the sequence is CRWQKVSLSE…AWELFKQQND (64 aa).

The protein is UBA domain-containing protein 7 (ucp7) of Schizosaccharomyces pombe (strain 972 / ATCC 24843) (Fission yeast).